Consider the following 302-residue polypeptide: Sulfate adenylyltransferase subunit 2 (302 aa).

The protein belongs to the PAPS reductase family. CysD subfamily. Heterodimer composed of CysD, the smaller subunit, and CysN.

The enzyme catalyses sulfate + ATP + H(+) = adenosine 5'-phosphosulfate + diphosphate. It participates in sulfur metabolism; hydrogen sulfide biosynthesis; sulfite from sulfate: step 1/3. With CysN forms the ATP sulfurylase (ATPS) that catalyzes the adenylation of sulfate producing adenosine 5'-phosphosulfate (APS) and diphosphate, the first enzymatic step in sulfur assimilation pathway. APS synthesis involves the formation of a high-energy phosphoric-sulfuric acid anhydride bond driven by GTP hydrolysis by CysN coupled to ATP hydrolysis by CysD. This chain is Sulfate adenylyltransferase subunit 2, found in Xanthomonas axonopodis pv. citri (strain 306).